The sequence spans 104 residues: Large ribosomal subunit protein bL21 (104 aa).

The protein belongs to the bacterial ribosomal protein bL21 family. As to quaternary structure, part of the 50S ribosomal subunit. Contacts protein L20.

In terms of biological role, this protein binds to 23S rRNA in the presence of protein L20. The protein is Large ribosomal subunit protein bL21 of Helicobacter pylori (strain J99 / ATCC 700824) (Campylobacter pylori J99).